Reading from the N-terminus, the 404-residue chain is NADH-quinone oxidoreductase subunit D (404 aa).

Belongs to the complex I 49 kDa subunit family. In terms of assembly, NDH-1 is composed of 14 different subunits. Subunits NuoB, C, D, E, F, and G constitute the peripheral sector of the complex.

Its subcellular location is the cell inner membrane. It carries out the reaction a quinone + NADH + 5 H(+)(in) = a quinol + NAD(+) + 4 H(+)(out). In terms of biological role, NDH-1 shuttles electrons from NADH, via FMN and iron-sulfur (Fe-S) centers, to quinones in the respiratory chain. The immediate electron acceptor for the enzyme in this species is believed to be ubiquinone. Couples the redox reaction to proton translocation (for every two electrons transferred, four hydrogen ions are translocated across the cytoplasmic membrane), and thus conserves the redox energy in a proton gradient. This Leptospira borgpetersenii serovar Hardjo-bovis (strain JB197) protein is NADH-quinone oxidoreductase subunit D.